The sequence spans 246 residues: Enolase-phosphatase E1 (246 aa).

Mg(2+) is bound by residues aspartate 11 and glutamate 13. Residues 140 to 141 and lysine 174 contribute to the substrate site; that span reads SS. Position 199 (aspartate 199) interacts with Mg(2+).

This sequence belongs to the HAD-like hydrolase superfamily. MasA/MtnC family. In terms of assembly, monomer. It depends on Mg(2+) as a cofactor.

It localises to the cytoplasm. Its subcellular location is the nucleus. It carries out the reaction 5-methylsulfanyl-2,3-dioxopentyl phosphate + H2O = 1,2-dihydroxy-5-(methylsulfanyl)pent-1-en-3-one + phosphate. The protein operates within amino-acid biosynthesis; L-methionine biosynthesis via salvage pathway; L-methionine from S-methyl-5-thio-alpha-D-ribose 1-phosphate: step 3/6. It participates in amino-acid biosynthesis; L-methionine biosynthesis via salvage pathway; L-methionine from S-methyl-5-thio-alpha-D-ribose 1-phosphate: step 4/6. Its function is as follows. Bifunctional enzyme that catalyzes the enolization of 2,3-diketo-5-methylthiopentyl-1-phosphate (DK-MTP-1-P) into the intermediate 2-hydroxy-3-keto-5-methylthiopentenyl-1-phosphate (HK-MTPenyl-1-P), which is then dephosphorylated to form the acireductone 1,2-dihydroxy-3-keto-5-methylthiopentene (DHK-MTPene). The chain is Enolase-phosphatase E1 from Acyrthosiphon pisum (Pea aphid).